The chain runs to 621 residues: 1-deoxy-D-xylulose-5-phosphate synthase (621 aa).

Thiamine diphosphate contacts are provided by residues His-80 and 121 to 123; that span reads GHS. Asp-152 provides a ligand contact to Mg(2+). Residues 153-154, Asn-181, Tyr-288, and Glu-370 each bind thiamine diphosphate; that span reads GA. Asn-181 is a binding site for Mg(2+).

It belongs to the transketolase family. DXPS subfamily. As to quaternary structure, homodimer. Requires Mg(2+) as cofactor. Thiamine diphosphate serves as cofactor.

The catalysed reaction is D-glyceraldehyde 3-phosphate + pyruvate + H(+) = 1-deoxy-D-xylulose 5-phosphate + CO2. The protein operates within metabolic intermediate biosynthesis; 1-deoxy-D-xylulose 5-phosphate biosynthesis; 1-deoxy-D-xylulose 5-phosphate from D-glyceraldehyde 3-phosphate and pyruvate: step 1/1. Its function is as follows. Catalyzes the acyloin condensation reaction between C atoms 2 and 3 of pyruvate and glyceraldehyde 3-phosphate to yield 1-deoxy-D-xylulose-5-phosphate (DXP). This Vibrio vulnificus (strain CMCP6) protein is 1-deoxy-D-xylulose-5-phosphate synthase.